A 673-amino-acid chain; its full sequence is Vasorin (673 aa).

Residues 1-23 (MCSRVPLLLPLLLLLALGPGVQG) form the signal peptide. One can recognise an LRRNT domain in the interval 24-51 (CPSGCQCSQPQTVFCTARQGTTVPRDVP). Residues 24 to 575 (CPSGCQCSQP…VTQAREGNLP (552 aa)) are Extracellular-facing. LRR repeat units lie at residues 52–74 (PDTVGLYVFENGITMLDAGSFAG), 77–98 (GLQLLDLSQNQIASLPSGVFQP), 101–122 (NLSNLDLTANRLHEITNETFRG), 125–146 (RLERLYLGKNRIRHIQPGAFDT), 149–170 (RLLELKLQDNELRALPPLRLPR), 171–191 (LLLLDLSHNSLLALEPGILDT), 193–214 (NVEALRLAGLGLQQLDEGLFSR), 217–238 (NLHDLDVSDNQLERVPPVIRGL), 240–262 (GLTRLRLAGNTRIAQLRPEDLAG), and 265–287 (ALQELDVSNLSLQALPGDLSGLF). N-linked (GlcNAc...) asparagine glycosylation is present at Asn101. Asn117 carries an N-linked (GlcNAc...) (complex) asparagine glycan. N-linked (GlcNAc...) asparagine glycosylation is present at Asn273. Residues 298–351 (NPFNCVCPLSWFGPWVRESHVTLASPEETRCHFPPKNAGRLLLELDYADFGCPA) enclose the LRRCT domain. Residues 358-370 (VPTTRPVVREPTA) show a composition bias toward low complexity. The interval 358–404 (VPTTRPVVREPTALSSSLAPTWLSPTEPATEAPSPPSTAPPTVGPVP) is disordered. Residues 390–404 (PSPPSTAPPTVGPVP) show a composition bias toward pro residues. The 38-residue stretch at 405-442 (QPQDCPPSTCLNGGTCHLGTRHHLACLCPEGFTGLYCE) folds into the EGF-like domain. Intrachain disulfides connect Cys409–Cys420, Cys414–Cys430, and Cys432–Cys441. One can recognise a Fibronectin type-III domain in the interval 460 to 558 (PPRSLTLGIE…ACGEAHTPPA (99 aa)). N-linked (GlcNAc...) asparagine glycans are attached at residues Asn500 and Asn528. A helical transmembrane segment spans residues 576–596 (LLIAPALAAVLLAALAAVGAA). Residues 597–673 (YCVRRGRAMA…QSPLHAKPYI (77 aa)) are Cytoplasmic-facing.

In terms of assembly, interacts with TGFB1, TGFB2 and TGFB3. In terms of processing, N-glycosylated. N-glycan heterogeneity at Asn-117: Hex5HexNAc4 (minor), dHex1Hex5HexNAc4 (major), Hex6HexNAc5 (minor) and dHex1Hex6HexNAc5 (minor). In terms of tissue distribution, expressed at highest levels in aorta, at intermediate levels in kidney and placenta and at lowest levels in brain, heart, liver, lung and skeletal muscle. Within the aorta, the strongest expression is found in the tunica media of the proximal ascending aorta, the descending thoracic aorta, the abdominal aorta and the coronary arteries. Within the kidney, expression is found in the interstitial cells.

Its subcellular location is the membrane. It localises to the secreted. May act as an inhibitor of TGF-beta signaling. This chain is Vasorin (VASN), found in Homo sapiens (Human).